The following is a 152-amino-acid chain: UPF0225 protein YchJ (152 aa).

This sequence belongs to the UPF0225 family.

The protein is UPF0225 protein YchJ of Escherichia coli O7:K1 (strain IAI39 / ExPEC).